We begin with the raw amino-acid sequence, 592 residues long: Potassium-transporting ATPase potassium-binding subunit (592 aa).

Helical transmembrane passes span 7–27 (ILLG…GTYI), 60–80 (LKYA…VYAL), 132–152 (ALAV…IALI), 175–195 (LHVL…QGVI), 279–299 (LSNF…CFTF), 310–330 (WAVL…AMHF), 409–429 (GLYG…LMIG), 449–469 (IAIL…VMLA), 513–533 (VMLG…VLAI), and 556–576 (LFVT…YVPA).

It belongs to the KdpA family. The system is composed of three essential subunits: KdpA, KdpB and KdpC.

The protein localises to the cell inner membrane. Its function is as follows. Part of the high-affinity ATP-driven potassium transport (or Kdp) system, which catalyzes the hydrolysis of ATP coupled with the electrogenic transport of potassium into the cytoplasm. This subunit binds the periplasmic potassium ions and delivers the ions to the membrane domain of KdpB through an intramembrane tunnel. The protein is Potassium-transporting ATPase potassium-binding subunit of Dechloromonas aromatica (strain RCB).